A 147-amino-acid chain; its full sequence is Cyanate hydratase (147 aa).

Active-site residues include Arg88, Glu91, and Ser114.

It belongs to the cyanase family.

The enzyme catalyses cyanate + hydrogencarbonate + 3 H(+) = NH4(+) + 2 CO2. In terms of biological role, catalyzes the reaction of cyanate with bicarbonate to produce ammonia and carbon dioxide. The polypeptide is Cyanate hydratase (Polynucleobacter asymbioticus (strain DSM 18221 / CIP 109841 / QLW-P1DMWA-1) (Polynucleobacter necessarius subsp. asymbioticus)).